The primary structure comprises 817 residues: Leucine--tRNA ligase (817 aa).

Residues 42–52 (PYPSGKLHMGH) carry the 'HIGH' region motif. A 'KMSKS' region motif is present at residues 576–580 (KMSKS). Lys579 serves as a coordination point for ATP.

The protein belongs to the class-I aminoacyl-tRNA synthetase family.

The protein localises to the cytoplasm. The enzyme catalyses tRNA(Leu) + L-leucine + ATP = L-leucyl-tRNA(Leu) + AMP + diphosphate. This is Leucine--tRNA ligase from Methylobacillus flagellatus (strain ATCC 51484 / DSM 6875 / VKM B-1610 / KT).